The sequence spans 529 residues: Mitochondrial inner membrane magnesium transporter MIT1 (529 aa).

Coiled-coil stretches lie at residues 336–388 and 416–450; these read KIQL…LKNE and LLETHLQLTDELSGELENMEEKITHYEELMRLNLD. A helical membrane pass occupies residues 456 to 476; sequence FILLNAKISFSTLFCSICAVI. The Mitochondrial intermembrane segment spans residues 477-492; it reads TSLFGMNLKNFIEHND. Residues 493-513 traverse the membrane as a helical segment; it reads YAFFIVSIFITSWSIVGIYFT. Residues 514-529 are Mitochondrial matrix-facing; it reads KNINTLLRFFDKYNVK.

This sequence belongs to the CorA metal ion transporter (MIT) (TC 1.A.35) family.

It localises to the mitochondrion inner membrane. Functionally, mitochondrial inner membrane magnesium transporter required for mitochondrial magnesium homeostasis. Involved in the development of the sporozoite in the mosquito vector midgut. The polypeptide is Mitochondrial inner membrane magnesium transporter MIT1 (Plasmodium falciparum (isolate 3D7)).